A 211-amino-acid chain; its full sequence is Stromal cell-derived factor 2 (211 aa).

Positions 1-18 (MAVVPLLLLGGLWSAVGA) are cleaved as a signal peptide. 3 consecutive MIR domains span residues 21 to 75 (LGVV…IRGK), 83 to 138 (GTPI…VLCN), and 139 to 193 (GPYW…AMEG).

It is found in the secreted. The sequence is that of Stromal cell-derived factor 2 (SDF2) from Homo sapiens (Human).